The following is a 257-amino-acid chain: GTP cyclohydrolase FolE2 (257 aa).

The protein belongs to the GTP cyclohydrolase IV family.

The catalysed reaction is GTP + H2O = 7,8-dihydroneopterin 3'-triphosphate + formate + H(+). It participates in cofactor biosynthesis; 7,8-dihydroneopterin triphosphate biosynthesis; 7,8-dihydroneopterin triphosphate from GTP: step 1/1. Its function is as follows. Converts GTP to 7,8-dihydroneopterin triphosphate. The protein is GTP cyclohydrolase FolE2 of Syntrophobacter fumaroxidans (strain DSM 10017 / MPOB).